The chain runs to 566 residues: Proline--tRNA ligase (566 aa).

Belongs to the class-II aminoacyl-tRNA synthetase family. ProS type 1 subfamily. Homodimer.

Its subcellular location is the cytoplasm. The enzyme catalyses tRNA(Pro) + L-proline + ATP = L-prolyl-tRNA(Pro) + AMP + diphosphate. Catalyzes the attachment of proline to tRNA(Pro) in a two-step reaction: proline is first activated by ATP to form Pro-AMP and then transferred to the acceptor end of tRNA(Pro). As ProRS can inadvertently accommodate and process non-cognate amino acids such as alanine and cysteine, to avoid such errors it has two additional distinct editing activities against alanine. One activity is designated as 'pretransfer' editing and involves the tRNA(Pro)-independent hydrolysis of activated Ala-AMP. The other activity is designated 'posttransfer' editing and involves deacylation of mischarged Ala-tRNA(Pro). The misacylated Cys-tRNA(Pro) is not edited by ProRS. The sequence is that of Proline--tRNA ligase from Campylobacter concisus (strain 13826).